A 151-amino-acid polypeptide reads, in one-letter code: Urease accessory protein UreE (151 aa).

This sequence belongs to the UreE family.

The protein localises to the cytoplasm. Functionally, involved in urease metallocenter assembly. Binds nickel. Probably functions as a nickel donor during metallocenter assembly. This is Urease accessory protein UreE from Bacillus cereus (strain ATCC 10987 / NRS 248).